Here is a 208-residue protein sequence, read N- to C-terminus: 23 kDa protein (208 aa).

The sequence is that of 23 kDa protein from Pea early browning virus.